Reading from the N-terminus, the 321-residue chain is UDP-N-acetyl-alpha-D-glucosaminuronate decarboxylase (321 aa).

G12, F13, I14, D33, N34, Y36, G38, L76, T95, A117, Y148, and K152 together coordinate NAD(+). Y148 functions as the Proton acceptor in the catalytic mechanism.

Belongs to the NAD(P)-dependent epimerase/dehydratase family. Homodimer. It depends on NAD(+) as a cofactor.

It catalyses the reaction UDP-2-acetamido-2-deoxy-alpha-D-glucuronate + H(+) = UDP-N-acetyl-alpha-D-xylosamine + CO2. Its activity is regulated as follows. Activity is completely inhibited by NADH but not by NADPH. Its function is as follows. Decarboxylase involved in the biosynthesis of the nucleotide-sugar UDP-N-acetylxylosamine (UDP-XylNAc). Catalyzes the NAD-dependent decarboxylation of UDP-N-acetylglucosaminuronic acid (UDP-GlcNAcA) to UDP-XylNAc. Cannot use other UDP-uronates, such as UDP-glucuronic acid (UDP-GlcA) and UDP-galacturonic acid (UDP-GalA). The protein is UDP-N-acetyl-alpha-D-glucosaminuronate decarboxylase of Bacillus cytotoxicus (strain DSM 22905 / CIP 110041 / 391-98 / NVH 391-98).